The chain runs to 335 residues: Biotin synthase (335 aa).

The region spanning 53-276 (VEIEGIVSVK…RTILRFAGGR (224 aa)) is the Radical SAM core domain. [4Fe-4S] cluster contacts are provided by C66, C70, and C73. Positions 109, 142, 201, and 271 each coordinate [2Fe-2S] cluster.

This sequence belongs to the radical SAM superfamily. Biotin synthase family. Homodimer. [4Fe-4S] cluster serves as cofactor. It depends on [2Fe-2S] cluster as a cofactor.

It carries out the reaction (4R,5S)-dethiobiotin + (sulfur carrier)-SH + 2 reduced [2Fe-2S]-[ferredoxin] + 2 S-adenosyl-L-methionine = (sulfur carrier)-H + biotin + 2 5'-deoxyadenosine + 2 L-methionine + 2 oxidized [2Fe-2S]-[ferredoxin]. It participates in cofactor biosynthesis; biotin biosynthesis; biotin from 7,8-diaminononanoate: step 2/2. In terms of biological role, catalyzes the conversion of dethiobiotin (DTB) to biotin by the insertion of a sulfur atom into dethiobiotin via a radical-based mechanism. The chain is Biotin synthase from Acidothermus cellulolyticus (strain ATCC 43068 / DSM 8971 / 11B).